A 277-amino-acid polypeptide reads, in one-letter code: Putative phosphoenolpyruvate synthase regulatory protein (277 aa).

157-164 (GVSRCGKT) lines the ADP pocket.

The protein belongs to the pyruvate, phosphate/water dikinase regulatory protein family. PSRP subfamily.

The enzyme catalyses [pyruvate, water dikinase] + ADP = [pyruvate, water dikinase]-phosphate + AMP + H(+). The catalysed reaction is [pyruvate, water dikinase]-phosphate + phosphate + H(+) = [pyruvate, water dikinase] + diphosphate. Bifunctional serine/threonine kinase and phosphorylase involved in the regulation of the phosphoenolpyruvate synthase (PEPS) by catalyzing its phosphorylation/dephosphorylation. This is Putative phosphoenolpyruvate synthase regulatory protein from Cronobacter sakazakii (strain ATCC BAA-894) (Enterobacter sakazakii).